The sequence spans 297 residues: Coiled-coil domain-containing protein 159 (297 aa).

A coiled-coil region spans residues 147 to 297 (EELELVREEV…SKSGRSFPPA (151 aa)). The interval 256-297 (LRGHKGHQCLSPPLPSWDSDSDCDQDLSQPPFSKSGRSFPPA) is disordered.

As to quaternary structure, interacts with DYNLT2. Interacts with GGNBP1. Interacts with OSBP2.

Functions during spermatid development; may participate in the centrosome reduction procedure of spermatids and is required for the formation of the connecting piece/sperm head-tail coupling apparatus (HTCA) and the correct and tight attachment of the flagellum to the nuclear envelope. This is Coiled-coil domain-containing protein 159 (CCDC159) from Homo sapiens (Human).